A 166-amino-acid chain; its full sequence is Protein UTR5 (166 aa).

This is Protein UTR5 (UTR5) from Saccharomyces cerevisiae (strain ATCC 204508 / S288c) (Baker's yeast).